The chain runs to 152 residues: Catabolic 3-dehydroquinase (152 aa).

The active-site Proton acceptor is the Tyr24. Positions 75, 81, and 88 each coordinate substrate. Catalysis depends on His101, which acts as the Proton donor. Residues 102–103 (IS) and Arg112 contribute to the substrate site.

This sequence belongs to the type-II 3-dehydroquinase family. In terms of assembly, homododecamer. Adopts a ring-like structure, composed of an arrangement of two hexameric rings stacked on top of one another.

The catalysed reaction is 3-dehydroquinate = 3-dehydroshikimate + H2O. It functions in the pathway aromatic compound metabolism; 3,4-dihydroxybenzoate biosynthesis; 3,4-dihydroxybenzoate from 3-dehydroquinate: step 1/2. In terms of biological role, is involved in the catabolism of quinate. Allows the utilization of quinate as carbon source via the beta-ketoadipate pathway. This is Catabolic 3-dehydroquinase from Phaeosphaeria nodorum (strain SN15 / ATCC MYA-4574 / FGSC 10173) (Glume blotch fungus).